The sequence spans 81 residues: Beta-defensin 34 (81 aa).

Positions 1-20 are cleaved as a signal peptide; it reads MKTFLFLFAVLFFWSQPRMH. 3 cysteine pairs are disulfide-bonded: Cys-28–Cys-55, Cys-35–Cys-49, and Cys-39–Cys-56. A compositionally biased stretch (polar residues) spans 62–72; sequence CGRSKGNQSDE. Residues 62–81 are disordered; that stretch reads CGRSKGNQSDEGSGHMGTRG.

The protein belongs to the beta-defensin family. As to expression, only expressed in epididymis (caput, corpus and cauda).

Its subcellular location is the secreted. Functionally, has antibacterial activity. This is Beta-defensin 34 (Defb34) from Mus musculus (Mouse).